The following is a 286-amino-acid chain: Pyridoxal kinase PdxY (286 aa).

Substrate contacts are provided by residues Ser9 and 44–45 (TQ). ATP contacts are provided by Asp111, Glu148, and Lys181. A substrate-binding site is contributed by Asp222.

Belongs to the pyridoxine kinase family. PdxY subfamily. As to quaternary structure, homodimer. The cofactor is Mg(2+).

It catalyses the reaction pyridoxal + ATP = pyridoxal 5'-phosphate + ADP + H(+). It participates in cofactor metabolism; pyridoxal 5'-phosphate salvage; pyridoxal 5'-phosphate from pyridoxal: step 1/1. Its function is as follows. Pyridoxal kinase involved in the salvage pathway of pyridoxal 5'-phosphate (PLP). Catalyzes the phosphorylation of pyridoxal to PLP. The protein is Pyridoxal kinase PdxY of Histophilus somni (strain 129Pt) (Haemophilus somnus).